The following is a 230-amino-acid chain: Flavin-dependent thymidylate synthase (230 aa).

Residues 1 to 217 form the ThyX domain; sequence MEIKVLEKGF…PVTYEAFLNF (217 aa). FAD is bound by residues serine 55, 78-80, and glutamate 86; that span reads RHR. DUMP contacts are provided by residues 75–78, 86–90, and arginine 156; these read QLVR and ERSGR. The ThyX motif signature appears at 78–88; that stretch reads RHRIASINERS. Residues 172–174 and asparagine 178 each bind FAD; that span reads NAR. Arginine 183 contacts dUMP. The active-site Involved in ionization of N3 of dUMP, leading to its activation is arginine 183.

This sequence belongs to the thymidylate synthase ThyX family. In terms of assembly, homotetramer. FAD is required as a cofactor.

It carries out the reaction dUMP + (6R)-5,10-methylene-5,6,7,8-tetrahydrofolate + NADPH + H(+) = dTMP + (6S)-5,6,7,8-tetrahydrofolate + NADP(+). It functions in the pathway pyrimidine metabolism; dTTP biosynthesis. Catalyzes the reductive methylation of 2'-deoxyuridine-5'-monophosphate (dUMP) to 2'-deoxythymidine-5'-monophosphate (dTMP) while utilizing 5,10-methylenetetrahydrofolate (mTHF) as the methyl donor, and NADPH and FADH(2) as the reductant. The polypeptide is Flavin-dependent thymidylate synthase (Kosmotoga olearia (strain ATCC BAA-1733 / DSM 21960 / TBF 19.5.1)).